Here is a 347-residue protein sequence, read N- to C-terminus: Toluene-4-sulfonate monooxygenase system iron-sulfur subunit TsaM1 (347 aa).

In terms of domain architecture, Rieske spans 7 to 109 (WYVAAWDTEI…VVERNRLVWI (103 aa)). 4 residues coordinate [2Fe-2S] cluster: Cys48, His50, Cys67, and His70.

As to quaternary structure, homotetramer. Part of the p-toluenesulfonate methyl-monooxygenase complex TsaBM, comprising the reductase TsaB and the oxygenase TsaM. It depends on [2Fe-2S] cluster as a cofactor.

The enzyme catalyses toluene-4-sulfonate + NADH + O2 + H(+) = 4-(hydroxymethyl)benzenesulfonate + NAD(+) + H2O. Functionally, involved in the toluene-4-sulfonate degradation pathway. Does not discriminate between the sulfonate and the carboxyl substituents and can also be involved in the p-toluenecarboxylate degradation pathway. Can use toluene-4-sulfonate, p-toluate, m-toluate and 4-ethylbenzoate as substrates, but not p-xylene, toluene and p-cresol. Also catalyzes the demethylation of 4-methoxybenzoate to 4-hydroxybenzoate. The protein is Toluene-4-sulfonate monooxygenase system iron-sulfur subunit TsaM1 (tsaM1) of Comamonas testosteroni (Pseudomonas testosteroni).